The sequence spans 211 residues: Uridine kinase (211 aa).

13-20 (GGTASGKT) contributes to the ATP binding site.

The protein belongs to the uridine kinase family.

The protein localises to the cytoplasm. The enzyme catalyses uridine + ATP = UMP + ADP + H(+). The catalysed reaction is cytidine + ATP = CMP + ADP + H(+). Its pathway is pyrimidine metabolism; CTP biosynthesis via salvage pathway; CTP from cytidine: step 1/3. It participates in pyrimidine metabolism; UMP biosynthesis via salvage pathway; UMP from uridine: step 1/1. This chain is Uridine kinase, found in Thermus thermophilus (strain ATCC BAA-163 / DSM 7039 / HB27).